A 503-amino-acid polypeptide reads, in one-letter code: Probable folate-biopterin transporter 6 (503 aa).

The next 12 helical transmembrane spans lie at 56–76 (SFVL…GSIF), 101–121 (LYYI…VFPI), 128–148 (PYFV…VVLG), 153–173 (ALAL…DVVI), 194–214 (LCMV…GVFV), 221–241 (GALG…FFIY), 281–301 (LYMF…FYWY), 314–334 (FVGI…LIYH), 344–364 (NILF…LVFI), 369–389 (LTLG…TKMI), 404–424 (LCPL…DSFG), and 450–470 (WLVI…VFLV).

The protein belongs to the major facilitator superfamily. Folate-biopterin transporter (TC 2.A.71) family.

It localises to the membrane. Could mediate folate transport. This Arabidopsis thaliana (Mouse-ear cress) protein is Probable folate-biopterin transporter 6.